The sequence spans 330 residues: Ferredoxin--NADP reductase (330 aa).

FAD-binding residues include Glu35, Gln43, Tyr48, Val90, Phe123, Asp285, and Thr326.

It belongs to the ferredoxin--NADP reductase type 2 family. As to quaternary structure, homodimer. FAD is required as a cofactor.

It catalyses the reaction 2 reduced [2Fe-2S]-[ferredoxin] + NADP(+) + H(+) = 2 oxidized [2Fe-2S]-[ferredoxin] + NADPH. The protein is Ferredoxin--NADP reductase of Streptococcus pyogenes serotype M3 (strain ATCC BAA-595 / MGAS315).